Here is a 153-residue protein sequence, read N- to C-terminus: Arginine repressor (153 aa).

The protein belongs to the ArgR family.

The protein localises to the cytoplasm. The protein operates within amino-acid biosynthesis; L-arginine biosynthesis [regulation]. Functionally, regulates arginine biosynthesis genes. The protein is Arginine repressor of Actinobacillus pleuropneumoniae serotype 5b (strain L20).